The chain runs to 976 residues: Ephrin type-A receptor 2 (976 aa).

A signal peptide spans 1 to 23; it reads MELWAARACFVLLWGCALAPATA. Positions 1–206 are mediates interaction with CLDN4; the sequence is MELWAARACF…YYKKCPELLQ (206 aa). Residues 25 to 537 are Extracellular-facing; sequence QGKEVVLLDF…SPEGSGSLAV (513 aa). Positions 28–206 constitute an Eph LBD domain; that stretch reads EVVLLDFAAA…YYKKCPELLQ (179 aa). Cystine bridges form between Cys70–Cys188 and Cys105–Cys115. In terms of domain architecture, Fibronectin type-III 1 spans 328 to 432; that stretch reads PPSAPHYLTA…TSRSFRTASV (105 aa). Asn407 and Asn435 each carry an N-linked (GlcNAc...) asparagine glycan. A Fibronectin type-III 2 domain is found at 438–529; that stretch reads EPPKVRLEGR…KVHEFQTLSP (92 aa). Residues 538–558 form a helical membrane-spanning segment; sequence IGGVAVCVVLLLLLAGAGFFI. The Cytoplasmic portion of the chain corresponds to 559-976; sequence HRRRKNLRAR…DQVNTVGIPI (418 aa). Ser570 is modified (phosphoserine). Tyr575 is modified (phosphotyrosine). Ser579 is subject to Phosphoserine. A Phosphotyrosine; by autocatalysis modification is found at Tyr588. A Phosphotyrosine modification is found at Tyr594. The segment at 606–906 is mediates interaction with ARHGEF16; it reads TEIHPSCVTR…STSGSEGVPF (301 aa). The region spanning 613–875 is the Protein kinase domain; that stretch reads VTRQKVIGAG…DIVSILDKLI (263 aa). 619–627 serves as a coordination point for ATP; that stretch reads IGAGEFGEV. Position 628 is a phosphotyrosine (Tyr628). ATP is bound at residue Lys646. Thr647 bears the Phosphothreonine mark. Tyr735 carries the post-translational modification Phosphotyrosine; by autocatalysis. The Proton acceptor role is filled by Asp739. Tyr772 carries the post-translational modification Phosphotyrosine. Ser869, Ser892, Ser897, and Ser901 each carry phosphoserine. A negatively regulates interaction with ARHGEF16 region spans residues 886 to 976; it reads DFDPRVSIRL…DQVNTVGIPI (91 aa). Positions 904–968 constitute an SAM domain; that stretch reads VPFRTVSEWL…AYSLLGLKDQ (65 aa). At Tyr921 the chain carries Phosphotyrosine; by autocatalysis. A Phosphotyrosine modification is found at Tyr930. Residues 974–976 carry the PDZ-binding motif; the sequence is IPI.

This sequence belongs to the protein kinase superfamily. Tyr protein kinase family. Ephrin receptor subfamily. Homodimer. Interacts with SLA. Interacts (phosphorylated form) with VAV2, VAV3 and PI3-kinase p85 subunit (PIK3R1, PIK3R2 or PIK3R3); critical for the EFNA1-induced activation of RAC1 which stimulates cell migration. Interacts with INPPL1; regulates activated EPHA2 endocytosis and degradation. Interacts (inactivated form) with PTK2/FAK1 and interacts (EFNA1 ligand-activated form) with PTPN11; regulates integrin-mediated adhesion. Interacts with ARHGEF16, DOCK4 and ELMO2; mediates ligand-independent activation of RAC1 which stimulates cell migration. Interacts with CLDN4; phosphorylates CLDN4 and may regulate tight junctions. Interacts with ACP1. Interacts with ANKS1A. Interacts with CEMIP. Interacts with NCK1; may regulate EPHA2 activity in cell migration and adhesion. Interacts with TIMD4. Autophosphorylates. Phosphorylated on tyrosine upon binding and activation by EFNA1. Phosphorylated residues Tyr-588 and Tyr-594 are required for binding VAV2 and VAV3 while phosphorylated residues Tyr-735 and Tyr-930 are required for binding PI3-kinase p85 subunit (PIK3R1, PIK3R2 or PIK3R3). These phosphorylated residues are critical for recruitment of VAV2 and VAV3 and PI3-kinase p85 subunit which transduce downstream signaling to activate RAC1 GTPase and cell migration. Dephosphorylation of Tyr-930 by PTPRF prevents the interaction of EPHA2 with NCK1. Phosphorylated at Ser-897 by PKB; serum-induced phosphorylation which targets EPHA2 to the cell leading edge and stimulates cell migration. Phosphorylation by PKB is inhibited by EFNA1-activated EPHA2 which regulates PKB activity via a reciprocal regulatory loop. Phosphorylated at Ser-897 in response to TNF by RPS6KA1 and RPS6KA3; RPS6KA-EPHA2 signaling pathway controls cell migration. Phosphorylated at Ser-897 by PKA; blocks cell retraction induced by EPHA2 kinase activity. Dephosphorylated by ACP1. In terms of processing, ubiquitinated by CHIP/STUB1. Ubiquitination is regulated by the HSP90 chaperone and regulates the receptor stability and activity through proteasomal degradation. ANKS1A prevents ubiquitination and degradation.

Its subcellular location is the cell membrane. It localises to the cell projection. The protein resides in the ruffle membrane. It is found in the lamellipodium membrane. The protein localises to the cell junction. Its subcellular location is the focal adhesion. The enzyme catalyses L-tyrosyl-[protein] + ATP = O-phospho-L-tyrosyl-[protein] + ADP + H(+). Functionally, receptor tyrosine kinase which binds promiscuously membrane-bound ephrin-A family ligands residing on adjacent cells, leading to contact-dependent bidirectional signaling into neighboring cells. The signaling pathway downstream of the receptor is referred to as forward signaling while the signaling pathway downstream of the ephrin ligand is referred to as reverse signaling. Activated by the ligand ephrin-A1/EFNA1 regulates migration, integrin-mediated adhesion, proliferation and differentiation of cells. Regulates cell adhesion and differentiation through DSG1/desmoglein-1 and inhibition of the ERK1/ERK2 signaling pathway. May also participate in UV radiation-induced apoptosis and have a ligand-independent stimulatory effect on chemotactic cell migration. During development, may function in distinctive aspects of pattern formation and subsequently in development of several fetal tissues. Involved for instance in angiogenesis, in early hindbrain development and epithelial proliferation and branching morphogenesis during mammary gland development. Engaged by the ligand ephrin-A5/EFNA5 may regulate lens fiber cells shape and interactions and be important for lens transparency development and maintenance. With ephrin-A2/EFNA2 may play a role in bone remodeling through regulation of osteoclastogenesis and osteoblastogenesis. In Macaca fascicularis (Crab-eating macaque), this protein is Ephrin type-A receptor 2 (EPHA2).